The sequence spans 128 residues: Small ribosomal subunit protein eS8 (128 aa).

This sequence belongs to the eukaryotic ribosomal protein eS8 family. Part of the 30S ribosomal subunit.

This Methanococcus maripaludis (strain C6 / ATCC BAA-1332) protein is Small ribosomal subunit protein eS8.